The chain runs to 236 residues: Ribosome maturation protein SDO1 homolog (236 aa).

It belongs to the SDO1/SBDS family.

The protein is Ribosome maturation protein SDO1 homolog of Pyrococcus horikoshii (strain ATCC 700860 / DSM 12428 / JCM 9974 / NBRC 100139 / OT-3).